Reading from the N-terminus, the 479-residue chain is Ribosomal RNA small subunit methyltransferase F (479 aa).

Residues 125–131 (AAAPGSK), Glu-149, Asp-176, and Asp-194 each bind S-adenosyl-L-methionine. Catalysis depends on Cys-247, which acts as the Nucleophile.

Belongs to the class I-like SAM-binding methyltransferase superfamily. RsmB/NOP family.

It is found in the cytoplasm. The catalysed reaction is cytidine(1407) in 16S rRNA + S-adenosyl-L-methionine = 5-methylcytidine(1407) in 16S rRNA + S-adenosyl-L-homocysteine + H(+). In terms of biological role, specifically methylates the cytosine at position 1407 (m5C1407) of 16S rRNA. The polypeptide is Ribosomal RNA small subunit methyltransferase F (Escherichia coli (strain SE11)).